Consider the following 90-residue polypeptide: Long neurotoxin 7 (90 aa).

A signal peptide spans 1-21; that stretch reads MKTLLLTLVLVTIMCLDLGYT. 5 disulfides stabilise this stretch: Cys-24–Cys-41, Cys-35–Cys-62, Cys-47–Cys-51, Cys-66–Cys-77, and Cys-78–Cys-83.

The protein belongs to the three-finger toxin family. Long-chain subfamily. Type II alpha-neurotoxin sub-subfamily. Expressed by the venom gland.

It localises to the secreted. Binds with high affinity to muscular (alpha-1/CHRNA1) and neuronal (alpha-7/CHRNA7) nicotinic acetylcholine receptor (nAChR) and inhibits acetylcholine from binding to the receptor, thereby impairing neuromuscular and neuronal transmission. In Naja sputatrix (Malayan spitting cobra), this protein is Long neurotoxin 7.